A 208-amino-acid polypeptide reads, in one-letter code: Redox-sensing transcriptional repressor Rex 1 (208 aa).

Positions 15–54 (SYYMCLERLLDEGVEVVSSEELARRLDLKASQIRKDLSYF) form a DNA-binding region, H-T-H motif. NAD(+) is bound at residue 89–94 (GAGNIG).

The protein belongs to the transcriptional regulatory Rex family. Homodimer.

It is found in the cytoplasm. Functionally, modulates transcription in response to changes in cellular NADH/NAD(+) redox state. This chain is Redox-sensing transcriptional repressor Rex 1, found in Thermotoga maritima (strain ATCC 43589 / DSM 3109 / JCM 10099 / NBRC 100826 / MSB8).